A 164-amino-acid chain; its full sequence is Decoration protein (164 aa).

The binding to the capsid hexamer stretch occupies residues 1–72 (MIDYSGLRTI…AIPPAPPAPP (72 aa)). The region spanning 71–164 (PPLTLSKDLT…VTVNPTVPGG (94 aa)) is the Ig-like domain.

Interacts with the major capsid protein; each hexon binds a single copy of the decoration protein.

Its subcellular location is the virion. Decoration protein that binds asymmetrically to the center of each capsid protein hexamer after capsid expansion. Stabilizes the capsid and protects from DNA release. This is Decoration protein from Escherichia phage T5 (Enterobacteria phage T5).